A 577-amino-acid chain; its full sequence is Isocitrate dehydrogenase kinase/phosphatase (577 aa).

ATP contacts are provided by residues 318 to 324 and K339; that span reads APGVRGM. D374 is an active-site residue.

The protein belongs to the AceK family.

Its subcellular location is the cytoplasm. The enzyme catalyses L-seryl-[isocitrate dehydrogenase] + ATP = O-phospho-L-seryl-[isocitrate dehydrogenase] + ADP + H(+). Its function is as follows. Bifunctional enzyme which can phosphorylate or dephosphorylate isocitrate dehydrogenase (IDH) on a specific serine residue. This is a regulatory mechanism which enables bacteria to bypass the Krebs cycle via the glyoxylate shunt in response to the source of carbon. When bacteria are grown on glucose, IDH is fully active and unphosphorylated, but when grown on acetate or ethanol, the activity of IDH declines drastically concomitant with its phosphorylation. The protein is Isocitrate dehydrogenase kinase/phosphatase of Pseudomonas aeruginosa (strain ATCC 15692 / DSM 22644 / CIP 104116 / JCM 14847 / LMG 12228 / 1C / PRS 101 / PAO1).